The sequence spans 607 residues: UvrABC system protein C (607 aa).

The region spanning 11–89 (CKPGVYRFED…IKEFAPPCNV (79 aa)) is the GIY-YIG domain. In terms of domain architecture, UVR spans 201–236 (SSLLESLKKKMLKASKNKEYEEAAILRDKIQAAQTV).

The protein belongs to the UvrC family. As to quaternary structure, interacts with UvrB in an incision complex.

It localises to the cytoplasm. Its function is as follows. The UvrABC repair system catalyzes the recognition and processing of DNA lesions. UvrC both incises the 5' and 3' sides of the lesion. The N-terminal half is responsible for the 3' incision and the C-terminal half is responsible for the 5' incision. This is UvrABC system protein C from Tropheryma whipplei (strain TW08/27) (Whipple's bacillus).